Consider the following 150-residue polypeptide: Cytochrome c oxidase subunit 5A, mitochondrial (150 aa).

The N-terminal 41 residues, 1 to 41 (MLGTALRRCAVAAASRAGSRGLLHPTPVPGPTAAIQSIRCY), are a transit peptide targeting the mitochondrion. An SIFI-degron motif is present at residues 2 to 17 (LGTALRRCAVAAASRA). An N6-acetyllysine mark is found at Lys87 and Lys113. A Phosphothreonine modification is found at Thr141.

The protein belongs to the cytochrome c oxidase subunit 5A family. In terms of assembly, component of the cytochrome c oxidase (complex IV, CIV), a multisubunit enzyme composed of 14 subunits. The complex is composed of a catalytic core of 3 subunits MT-CO1, MT-CO2 and MT-CO3, encoded in the mitochondrial DNA, and 11 supernumerary subunits COX4I, COX5A, COX5B, COX6A, COX6B, COX6C, COX7A, COX7B, COX7C, COX8 and NDUFA4, which are encoded in the nuclear genome. The complex exists as a monomer or a dimer and forms supercomplexes (SCs) in the inner mitochondrial membrane with NADH-ubiquinone oxidoreductase (complex I, CI) and ubiquinol-cytochrome c oxidoreductase (cytochrome b-c1 complex, complex III, CIII), resulting in different assemblies (supercomplex SCI(1)III(2)IV(1) and megacomplex MCI(2)III(2)IV(2)). Interacts with AFG1L. Interacts with RAB5IF. In response to mitochondrial stress, the precursor protein is ubiquitinated by the SIFI complex in the cytoplasm before mitochondrial import, leading to its degradation. Within the SIFI complex, UBR4 initiates ubiquitin chain that are further elongated or branched by KCMF1.

Its subcellular location is the mitochondrion inner membrane. Its pathway is energy metabolism; oxidative phosphorylation. Component of the cytochrome c oxidase, the last enzyme in the mitochondrial electron transport chain which drives oxidative phosphorylation. The respiratory chain contains 3 multisubunit complexes succinate dehydrogenase (complex II, CII), ubiquinol-cytochrome c oxidoreductase (cytochrome b-c1 complex, complex III, CIII) and cytochrome c oxidase (complex IV, CIV), that cooperate to transfer electrons derived from NADH and succinate to molecular oxygen, creating an electrochemical gradient over the inner membrane that drives transmembrane transport and the ATP synthase. Cytochrome c oxidase is the component of the respiratory chain that catalyzes the reduction of oxygen to water. Electrons originating from reduced cytochrome c in the intermembrane space (IMS) are transferred via the dinuclear copper A center (CU(A)) of subunit 2 and heme A of subunit 1 to the active site in subunit 1, a binuclear center (BNC) formed by heme A3 and copper B (CU(B)). The BNC reduces molecular oxygen to 2 water molecules using 4 electrons from cytochrome c in the IMS and 4 protons from the mitochondrial matrix. The protein is Cytochrome c oxidase subunit 5A, mitochondrial (COX5A) of Otolemur crassicaudatus (Brown greater galago).